Consider the following 603-residue polypeptide: Prostaglandin G/H synthase 2 (603 aa).

The first 17 residues, Met-1–Ala-17, serve as a signal peptide directing secretion. The EGF-like domain maps to Ala-18–Thr-55. Intrachain disulfides connect Cys-21/Cys-32, Cys-22/Cys-145, Cys-26/Cys-42, and Cys-44/Cys-54. Asn-53 and Asn-90 each carry an N-linked (GlcNAc...) asparagine glycan. Arg-106 is a substrate binding site. An N-linked (GlcNAc...) asparagine glycan is attached at Asn-130. His-193 (proton acceptor) is an active-site residue. Tyr-341 contacts substrate. Tyr-371 acts as the For cyclooxygenase activity in catalysis. Residue His-374 participates in heme b binding. A disulfide bridge connects residues Cys-555 and Cys-561.

It belongs to the prostaglandin G/H synthase family. As to quaternary structure, homodimer. Heme b is required as a cofactor.

It is found in the microsome membrane. It localises to the endoplasmic reticulum membrane. It catalyses the reaction (5Z,8Z,11Z,14Z)-eicosatetraenoate + AH2 + 2 O2 = prostaglandin H2 + A + H2O. It carries out the reaction (9Z,12Z)-octadecadienoate + AH2 + O2 = (9R)-hydroxy-(10E,12Z)-octadecadienoate + A + H2O. The enzyme catalyses (9Z,12Z)-octadecadienoate + AH2 + O2 = (9S)-hydroxy-(10E,12Z)-octadecadienoate + A + H2O. The catalysed reaction is (9Z,12Z)-octadecadienoate + AH2 + O2 = (13S)-hydroxy-(9Z,11E)-octadecadienoate + A + H2O. It catalyses the reaction (9Z,12Z)-octadecadienoate + AH2 + O2 = (13R)-hydroxy-(9Z,11E)-octadecadienoate + A + H2O. The protein operates within lipid metabolism; prostaglandin biosynthesis. Functionally, dual cyclooxygenase and peroxidase in the biosynthesis pathway of prostanoids, a class of C20 oxylipins mainly derived from arachidonate ((5Z,8Z,11Z,14Z)-eicosatetraenoate, AA, C20:4(n-6)), with a particular role in the inflammatory response. The cyclooxygenase activity oxygenates AA to the hydroperoxy endoperoxide prostaglandin G2 (PGG2), and the peroxidase activity reduces PGG2 to the hydroxy endoperoxide prostaglandin H2 (PGH2), the precursor of all 2-series prostaglandins and thromboxanes. This complex transformation is initiated by abstraction of hydrogen at carbon 13 (with S-stereochemistry), followed by insertion of molecular O2 to form the endoperoxide bridge between carbon 9 and 11 that defines prostaglandins. The insertion of a second molecule of O2 (bis-oxygenase activity) yields a hydroperoxy group in PGG2 that is then reduced to PGH2 by two electrons. Similarly catalyzes successive cyclooxygenation and peroxidation of dihomo-gamma-linoleate (DGLA, C20:3(n-6)) and eicosapentaenoate (EPA, C20:5(n-3)) to corresponding PGH1 and PGH3, the precursors of 1- and 3-series prostaglandins. In an alternative pathway of prostanoid biosynthesis, converts 2-arachidonoyl lysophopholipids to prostanoid lysophopholipids, which are then hydrolyzed by intracellular phospholipases to release free prostanoids. Metabolizes 2-arachidonoyl glycerol yielding the glyceryl ester of PGH2, a process that can contribute to pain response. Generates lipid mediators from n-3 and n-6 polyunsaturated fatty acids (PUFAs) via a lipoxygenase-type mechanism. Oxygenates PUFAs to hydroperoxy compounds and then reduces them to corresponding alcohols. Plays a role in the generation of resolution phase interaction products (resolvins) during both sterile and infectious inflammation. Metabolizes docosahexaenoate (DHA, C22:6(n-3)) to 17R-HDHA, a precursor of the D-series resolvins (RvDs). As a component of the biosynthetic pathway of E-series resolvins (RvEs), converts eicosapentaenoate (EPA, C20:5(n-3)) primarily to 18S-HEPE that is further metabolized by ALOX5 and LTA4H to generate 18S-RvE1 and 18S-RvE2. In vascular endothelial cells, converts docosapentaenoate (DPA, C22:5(n-3)) to 13R-HDPA, a precursor for 13-series resolvins (RvTs) shown to activate macrophage phagocytosis during bacterial infection. In activated leukocytes, contributes to oxygenation of hydroxyeicosatetraenoates (HETE) to diHETES (5,15-diHETE and 5,11-diHETE). Can also use linoleate (LA, (9Z,12Z)-octadecadienoate, C18:2(n-6)) as substrate and produce hydroxyoctadecadienoates (HODEs) in a regio- and stereospecific manner, being (9R)-HODE ((9R)-hydroxy-(10E,12Z)-octadecadienoate) and (13S)-HODE ((13S)-hydroxy-(9Z,11E)-octadecadienoate) its major products. During neuroinflammation, plays a role in neuronal secretion of specialized preresolving mediators (SPMs) 15R-lipoxin A4 that regulates phagocytic microglia. In Gallus gallus (Chicken), this protein is Prostaglandin G/H synthase 2 (PTGS2).